We begin with the raw amino-acid sequence, 204 residues long: N-(5'-phosphoribosyl)anthranilate isomerase (204 aa).

The protein belongs to the TrpF family.

It carries out the reaction N-(5-phospho-beta-D-ribosyl)anthranilate = 1-(2-carboxyphenylamino)-1-deoxy-D-ribulose 5-phosphate. Its pathway is amino-acid biosynthesis; L-tryptophan biosynthesis; L-tryptophan from chorismate: step 3/5. The protein is N-(5'-phosphoribosyl)anthranilate isomerase of Geobacter sp. (strain M21).